The primary structure comprises 435 residues: Glutamine synthetase (435 aa).

A GS beta-grasp domain is found at 12-94; sequence KSIKYFMISY…VAADCVMDDR (83 aa). Positions 100–435 constitute a GS catalytic domain; that stretch reads PRVVLKRLVA…QWERDSTLDI (336 aa). The Mg(2+) site is built by Glu123, Glu125, Glu180, and Glu187. Residue Gly232 coordinates L-glutamate. Residue His236 coordinates Mg(2+). Residue Ser240 participates in ATP binding. The L-glutamate site is built by Arg291 and Arg315. Residues Arg315 and Arg320 each coordinate ATP. Glu328 is a Mg(2+) binding site. Arg330 contributes to the L-glutamate binding site.

This sequence belongs to the glutamine synthetase family. Homooctamer. Mg(2+) serves as cofactor.

It carries out the reaction L-glutamate + NH4(+) + ATP = L-glutamine + ADP + phosphate + H(+). Catalyzes the ATP-dependent biosynthesis of glutamine from glutamate and ammonia. This chain is Glutamine synthetase, found in Rhizobium leguminosarum bv. phaseoli.